We begin with the raw amino-acid sequence, 76 residues long: uncharacterized protein (76 aa).

An N-terminal signal peptide occupies residues Met-1–Ala-22.

This is an uncharacterized protein from Escherichia coli O157:H7.